Reading from the N-terminus, the 345-residue chain is Protein RecA (345 aa).

Residue 68–75 (GVESSGKT) coordinates ATP.

This sequence belongs to the RecA family.

Its subcellular location is the cytoplasm. Can catalyze the hydrolysis of ATP in the presence of single-stranded DNA, the ATP-dependent uptake of single-stranded DNA by duplex DNA, and the ATP-dependent hybridization of homologous single-stranded DNAs. It interacts with LexA causing its activation and leading to its autocatalytic cleavage. The sequence is that of Protein RecA from Aquifex aeolicus (strain VF5).